The following is a 173-amino-acid chain: Bifunctional protein PyrR (173 aa).

Positions 93-105 (VILIDDVLYTGRT) match the PRPP-binding motif.

This sequence belongs to the purine/pyrimidine phosphoribosyltransferase family. PyrR subfamily. Homodimer and homohexamer; in equilibrium.

The catalysed reaction is UMP + diphosphate = 5-phospho-alpha-D-ribose 1-diphosphate + uracil. Its function is as follows. Regulates transcriptional attenuation of the pyrimidine nucleotide (pyr) operon by binding in a uridine-dependent manner to specific sites on pyr mRNA. This disrupts an antiterminator hairpin in the RNA and favors formation of a downstream transcription terminator, leading to a reduced expression of downstream genes. Also displays a weak uracil phosphoribosyltransferase activity which is not physiologically significant. The protein is Bifunctional protein PyrR of Streptococcus pyogenes serotype M12 (strain MGAS2096).